The following is a 270-amino-acid chain: Type III pantothenate kinase (270 aa).

Glutamate 16–methionine 23 lines the ATP pocket. Residues tyrosine 106 and glycine 113–arginine 116 each bind substrate. Aspartate 115 acts as the Proton acceptor in catalysis. Aspartate 136 contributes to the K(+) binding site. Position 139 (threonine 139) interacts with ATP. A substrate-binding site is contributed by threonine 191.

It belongs to the type III pantothenate kinase family. As to quaternary structure, homodimer. Requires NH4(+) as cofactor. K(+) serves as cofactor.

Its subcellular location is the cytoplasm. The enzyme catalyses (R)-pantothenate + ATP = (R)-4'-phosphopantothenate + ADP + H(+). It functions in the pathway cofactor biosynthesis; coenzyme A biosynthesis; CoA from (R)-pantothenate: step 1/5. In terms of biological role, catalyzes the phosphorylation of pantothenate (Pan), the first step in CoA biosynthesis. This is Type III pantothenate kinase from Chlorobium luteolum (strain DSM 273 / BCRC 81028 / 2530) (Pelodictyon luteolum).